Consider the following 412-residue polypeptide: Eukaryotic initiation factor 4A-1 (412 aa).

Ala-2 bears the N-acetylalanine mark. The short motif at 39-67 is the Q motif element; that stretch reads ESFDAMGLQENLLRGIYAYGFEKPSAIQQ. In terms of domain architecture, Helicase ATP-binding spans 70 to 240; it reads IVPFCKGLDV…RKFMSKPVRI (171 aa). 83–90 contacts ATP; it reads AQSGTGKT. Ser-104 carries the post-translational modification Phosphoserine. The residue at position 145 (Thr-145) is a Phosphothreonine. Positions 188–191 match the DEAD box motif; that stretch reads DEAD. The 162-residue stretch at 251 to 412 folds into the Helicase C-terminal domain; sequence GIKQFYVNVE…ELPSNVADLL (162 aa).

Belongs to the DEAD box helicase family. eIF4A subfamily. In terms of assembly, eIF4F is a multi-subunit complex, the composition of which varies with external and internal environmental conditions. It is composed of at least EIF4A, EIF4E and EIF4G. Interacts with CDKA-1. Interacts with MRF1, MRF2, MRF3/ECIP1 and MRF4. Highly expressed in the whole plant.

The protein localises to the cytoplasm. The catalysed reaction is ATP + H2O = ADP + phosphate + H(+). Its function is as follows. ATP-dependent RNA helicase which is a subunit of the eIF4F complex involved in cap recognition and is required for mRNA binding to ribosome. In the current model of translation initiation, eIF4A unwinds RNA secondary structures in the 5'-UTR of mRNAs which is necessary to allow efficient binding of the small ribosomal subunit, and subsequent scanning for the initiator codon. The protein is Eukaryotic initiation factor 4A-1 of Arabidopsis thaliana (Mouse-ear cress).